The sequence spans 119 residues: Phytosulfokines 2 (119 aa).

The first 34 residues, 1–34, serve as a signal peptide directing secretion; it reads MSTTRGVSSSSAAAALALLLLFALCFFSFHSAAA. The propeptide occupies 35-109; the sequence is ARAVPRDEHQ…RRLLSDAHLD (75 aa). Residues Tyr110 and Tyr112 each carry the sulfotyrosine modification. A propeptide spanning residues 115 to 119 is cleaved from the precursor; that stretch reads HKNKP.

This sequence belongs to the phytosulfokine family. Post-translationally, sulfation is important for activity and for the binding to a putative membrane receptor. PSK-alpha is produced by endopeptidase digestion. PSK-beta is produced from PSK-alpha by exopeptidase digestion.

It is found in the secreted. Its function is as follows. Promotes plant cell differentiation, organogenesis and somatic embryogenesis as well as cell proliferation. This is Phytosulfokines 2 (PSK2) from Oryza sativa subsp. indica (Rice).